The primary structure comprises 152 residues: MIALLQRVSQARVEVGGRRVGEIGPGLLVLVCAEPSDTGAVADKLVERLLKLRVFSDDAGKMNRSVVEAGGGLLIVSQFTLAADCSGGNRPSFSGAAPAEQGRVLYERLLATARSRHTPVECGEFGADMQVLLVNDGPVTIPLVVGHDKLRP.

The short motif at glycine 137–proline 138 is the Gly-cisPro motif, important for rejection of L-amino acids element.

Belongs to the DTD family. As to quaternary structure, homodimer.

Its subcellular location is the cytoplasm. The catalysed reaction is glycyl-tRNA(Ala) + H2O = tRNA(Ala) + glycine + H(+). It catalyses the reaction a D-aminoacyl-tRNA + H2O = a tRNA + a D-alpha-amino acid + H(+). In terms of biological role, an aminoacyl-tRNA editing enzyme that deacylates mischarged D-aminoacyl-tRNAs. Also deacylates mischarged glycyl-tRNA(Ala), protecting cells against glycine mischarging by AlaRS. Acts via tRNA-based rather than protein-based catalysis; rejects L-amino acids rather than detecting D-amino acids in the active site. By recycling D-aminoacyl-tRNA to D-amino acids and free tRNA molecules, this enzyme counteracts the toxicity associated with the formation of D-aminoacyl-tRNA entities in vivo and helps enforce protein L-homochirality. The polypeptide is D-aminoacyl-tRNA deacylase (Methylibium petroleiphilum (strain ATCC BAA-1232 / LMG 22953 / PM1)).